A 474-amino-acid chain; its full sequence is uncharacterized protein (474 aa).

A run of 10 helical transmembrane segments spans residues 17–39 (ILGG…SVYY), 44–61 (FLNF…GFVL), 81–103 (LAWL…YFSY), 144–166 (GVGI…YLLY), 186–208 (IIWI…GLSF), 239–256 (IVMI…FSIH), 268–286 (IQTK…IISI), 319–341 (LSLF…TGGV), 385–407 (AFVV…IALG), and 444–466 (IIAM…TLYF).

Belongs to the TrkH potassium transport family.

It is found in the cell membrane. This is an uncharacterized protein from Methanocaldococcus jannaschii (strain ATCC 43067 / DSM 2661 / JAL-1 / JCM 10045 / NBRC 100440) (Methanococcus jannaschii).